The sequence spans 548 residues: Chaperonin GroEL (548 aa).

Residues 30–33, K51, 87–91, G415, and D496 contribute to the ATP site; these read TLGP and DGTTT.

This sequence belongs to the chaperonin (HSP60) family. As to quaternary structure, forms a cylinder of 14 subunits composed of two heptameric rings stacked back-to-back. Interacts with the co-chaperonin GroES.

Its subcellular location is the cytoplasm. The catalysed reaction is ATP + H2O + a folded polypeptide = ADP + phosphate + an unfolded polypeptide.. Its function is as follows. Together with its co-chaperonin GroES, plays an essential role in assisting protein folding. The GroEL-GroES system forms a nano-cage that allows encapsulation of the non-native substrate proteins and provides a physical environment optimized to promote and accelerate protein folding. This Haemophilus influenzae (strain ATCC 51907 / DSM 11121 / KW20 / Rd) protein is Chaperonin GroEL.